The sequence spans 431 residues: Histidine--tRNA ligase (431 aa).

This sequence belongs to the class-II aminoacyl-tRNA synthetase family.

It localises to the cytoplasm. The enzyme catalyses tRNA(His) + L-histidine + ATP = L-histidyl-tRNA(His) + AMP + diphosphate + H(+). This chain is Histidine--tRNA ligase (hisS), found in Pyrococcus horikoshii (strain ATCC 700860 / DSM 12428 / JCM 9974 / NBRC 100139 / OT-3).